We begin with the raw amino-acid sequence, 327 residues long: Undecaprenyl-phosphate 4-deoxy-4-formamido-L-arabinose transferase (327 aa).

A run of 2 helical transmembrane segments spans residues 236–256 (LSIFGSVIALLGFAFGLLLVV) and 270–290 (VFMLFAVLFMFIGAQFVGMGL).

Belongs to the glycosyltransferase 2 family.

Its subcellular location is the cell inner membrane. The catalysed reaction is UDP-4-deoxy-4-formamido-beta-L-arabinose + di-trans,octa-cis-undecaprenyl phosphate = 4-deoxy-4-formamido-alpha-L-arabinopyranosyl di-trans,octa-cis-undecaprenyl phosphate + UDP. Its pathway is glycolipid biosynthesis; 4-amino-4-deoxy-alpha-L-arabinose undecaprenyl phosphate biosynthesis; 4-amino-4-deoxy-alpha-L-arabinose undecaprenyl phosphate from UDP-4-deoxy-4-formamido-beta-L-arabinose and undecaprenyl phosphate: step 1/2. The protein operates within bacterial outer membrane biogenesis; lipopolysaccharide biosynthesis. Functionally, catalyzes the transfer of 4-deoxy-4-formamido-L-arabinose from UDP to undecaprenyl phosphate. The modified arabinose is attached to lipid A and is required for resistance to polymyxin and cationic antimicrobial peptides. The polypeptide is Undecaprenyl-phosphate 4-deoxy-4-formamido-L-arabinose transferase (Klebsiella pneumoniae subsp. pneumoniae (strain ATCC 700721 / MGH 78578)).